We begin with the raw amino-acid sequence, 442 residues long: 3-oxoacyl-[acyl-carrier-protein] synthase homolog (442 aa).

The Ketosynthase family 3 (KS3) domain occupies 2 to 438 (SRRVVITGLG…GVNTSLLFKK (437 aa)). Active-site for beta-ketoacyl synthase activity residues include cysteine 187, histidine 322, and histidine 362.

This sequence belongs to the thiolase-like superfamily. Beta-ketoacyl-ACP synthases family.

The protein localises to the mitochondrion. It carries out the reaction a fatty acyl-[ACP] + malonyl-[ACP] + H(+) = a 3-oxoacyl-[ACP] + holo-[ACP] + CO2. Functionally, possibly involved in the synthesis of a specialized molecule, probably related to a fatty acid, which is essential for mitochondrial respiration. Is essential for oxygen uptake and the presence of cytochromes A and B. This is 3-oxoacyl-[acyl-carrier-protein] synthase homolog (CEM1) from Saccharomyces cerevisiae (strain ATCC 204508 / S288c) (Baker's yeast).